Consider the following 307-residue polypeptide: tRNA pseudouridine synthase B (307 aa).

The active-site Nucleophile is the Asp48.

This sequence belongs to the pseudouridine synthase TruB family. Type 1 subfamily.

The enzyme catalyses uridine(55) in tRNA = pseudouridine(55) in tRNA. Its function is as follows. Responsible for synthesis of pseudouridine from uracil-55 in the psi GC loop of transfer RNAs. This Neisseria meningitidis serogroup B (strain ATCC BAA-335 / MC58) protein is tRNA pseudouridine synthase B.